Reading from the N-terminus, the 261-residue chain is 4-phosphopantoate--beta-alanine ligase (261 aa).

ATP contacts are provided by residues Arg17, Arg39, 181 to 182, 187 to 188, and 199 to 200; these read DL, RS, and NI.

This sequence belongs to the archaeal phosphopantothenate synthetase family. In terms of assembly, homodimer.

It catalyses the reaction (R)-4-phosphopantoate + beta-alanine + ATP = (R)-4'-phosphopantothenate + AMP + diphosphate + H(+). It participates in cofactor biosynthesis; coenzyme A biosynthesis. Catalyzes the condensation of (R)-4-phosphopantoate and beta-alanine to 4'-phosphopantothenate in the CoA biosynthesis pathway. The polypeptide is 4-phosphopantoate--beta-alanine ligase (Thermococcus onnurineus (strain NA1)).